A 59-amino-acid polypeptide reads, in one-letter code: Large ribosomal subunit protein bL32 (59 aa).

The protein belongs to the bacterial ribosomal protein bL32 family.

The sequence is that of Large ribosomal subunit protein bL32 from Malacoplasma penetrans (strain HF-2) (Mycoplasma penetrans).